We begin with the raw amino-acid sequence, 912 residues long: Probable transmembrane GTPase FZO-like, chloroplastic (912 aa).

The N-terminal 54 residues, 1–54 (MRTLISHRQCVTSPFLISAASPPFPGRCFKLSSFTPPRHRRFSSLSIRNISHES), are a transit peptide targeting the chloroplast. The tract at residues 51–71 (SHESADQTSSSRPRTLYPGGY) is disordered. Residues 55-773 (ADQTSSSRPR…SKRLEQDIRE (719 aa)) are Stromal-facing. Residues 359 to 364 (NSGKST) and Ser-521 each bind GTP. A helical transmembrane segment spans residues 774–794 (VFFVTVGGLGAAGLSASLLTS). The Chloroplast intermembrane segment spans residues 795 to 801 (VLPTTLE). Residues 802 to 822 (DLLALGLCSAGGYVAIANFPY) form a helical membrane-spanning segment. Residues 823–912 (RRQAIIGKVN…LHVSRDEMRL (90 aa)) lie on the Stromal side of the membrane. The stretch at 877–904 (DRLLGIQKELSDIRSKLQLLQVDIDNLH) forms a coiled coil.

This sequence belongs to the TRAFAC class dynamin-like GTPase superfamily. Dynamin/Fzo/YdjA family. Mitofusin subfamily.

The protein resides in the plastid. The protein localises to the chloroplast inner membrane. It is found in the chloroplast thylakoid membrane. In terms of biological role, probable membrane-remodeling GTPase that plays a unique role in the in the determination of thylakoid and chloroplast morphology and regulates organization of the thylakoid network. Not involved in the determination of mitochondrial morphology or ultrastructure. The polypeptide is Probable transmembrane GTPase FZO-like, chloroplastic (Arabidopsis thaliana (Mouse-ear cress)).